The sequence spans 122 residues: Large ribosomal subunit protein uL14 (122 aa).

It belongs to the universal ribosomal protein uL14 family. As to quaternary structure, part of the 50S ribosomal subunit. Forms a cluster with proteins L3 and L19. In the 70S ribosome, L14 and L19 interact and together make contacts with the 16S rRNA in bridges B5 and B8.

In terms of biological role, binds to 23S rRNA. Forms part of two intersubunit bridges in the 70S ribosome. The protein is Large ribosomal subunit protein uL14 of Chlamydia caviae (strain ATCC VR-813 / DSM 19441 / 03DC25 / GPIC) (Chlamydophila caviae).